A 162-amino-acid polypeptide reads, in one-letter code: Ribosomal RNA large subunit methyltransferase H (162 aa).

Glycine 108 serves as a coordination point for S-adenosyl-L-methionine.

This sequence belongs to the RNA methyltransferase RlmH family. In terms of assembly, homodimer.

The protein localises to the cytoplasm. It catalyses the reaction pseudouridine(1915) in 23S rRNA + S-adenosyl-L-methionine = N(3)-methylpseudouridine(1915) in 23S rRNA + S-adenosyl-L-homocysteine + H(+). Functionally, specifically methylates the pseudouridine at position 1915 (m3Psi1915) in 23S rRNA. The sequence is that of Ribosomal RNA large subunit methyltransferase H from Methylobacterium sp. (strain 4-46).